We begin with the raw amino-acid sequence, 126 residues long: Large ribosomal subunit protein bL20c (126 aa).

It belongs to the bacterial ribosomal protein bL20 family.

The protein resides in the plastid. It is found in the chloroplast. Binds directly to 23S ribosomal RNA and is necessary for the in vitro assembly process of the 50S ribosomal subunit. It is not involved in the protein synthesizing functions of that subunit. In Pelargonium hortorum (Common geranium), this protein is Large ribosomal subunit protein bL20c.